The chain runs to 95 residues: uncharacterized protein (95 aa).

The tract at residues 1 to 73 (MAHFKDDLQT…AQQPSMRTEL (73 aa)) is disordered. Composition is skewed to polar residues over residues 42-52 (SNHSPSVQESP) and 62-73 (GSAQQPSMRTEL).

This is an uncharacterized protein from Homo sapiens (Human).